Here is a 347-residue protein sequence, read N- to C-terminus: Ketol-acid reductoisomerase (NADP(+)) (347 aa).

The 180-residue stretch at 3 to 182 (TKMFYDKDID…GSGRAGILET (180 aa)) folds into the KARI N-terminal Rossmann domain. NADP(+)-binding positions include 26 to 29 (YGAQ), R49, S53, and 83 to 86 (DELQ). The active site involves H108. G134 contacts NADP(+). One can recognise a KARI C-terminal knotted domain in the interval 183–328 (TFEEETTEDL…KKVRAMMPWI (146 aa)). Mg(2+) is bound by residues D191, E195, E227, and E231. S252 serves as a coordination point for substrate.

The protein belongs to the ketol-acid reductoisomerase family. The cofactor is Mg(2+).

It carries out the reaction (2R)-2,3-dihydroxy-3-methylbutanoate + NADP(+) = (2S)-2-acetolactate + NADPH + H(+). The enzyme catalyses (2R,3R)-2,3-dihydroxy-3-methylpentanoate + NADP(+) = (S)-2-ethyl-2-hydroxy-3-oxobutanoate + NADPH + H(+). It participates in amino-acid biosynthesis; L-isoleucine biosynthesis; L-isoleucine from 2-oxobutanoate: step 2/4. Its pathway is amino-acid biosynthesis; L-valine biosynthesis; L-valine from pyruvate: step 2/4. In terms of biological role, involved in the biosynthesis of branched-chain amino acids (BCAA). Catalyzes an alkyl-migration followed by a ketol-acid reduction of (S)-2-acetolactate (S2AL) to yield (R)-2,3-dihydroxy-isovalerate. In the isomerase reaction, S2AL is rearranged via a Mg-dependent methyl migration to produce 3-hydroxy-3-methyl-2-ketobutyrate (HMKB). In the reductase reaction, this 2-ketoacid undergoes a metal-dependent reduction by NADPH to yield (R)-2,3-dihydroxy-isovalerate. The protein is Ketol-acid reductoisomerase (NADP(+)) of Leuconostoc mesenteroides subsp. mesenteroides (strain ATCC 8293 / DSM 20343 / BCRC 11652 / CCM 1803 / JCM 6124 / NCDO 523 / NBRC 100496 / NCIMB 8023 / NCTC 12954 / NRRL B-1118 / 37Y).